A 434-amino-acid polypeptide reads, in one-letter code: Trigger factor (434 aa).

The region spanning Lys-161–Pro-246 is the PPIase FKBP-type domain.

Belongs to the FKBP-type PPIase family. Tig subfamily.

Its subcellular location is the cytoplasm. The enzyme catalyses [protein]-peptidylproline (omega=180) = [protein]-peptidylproline (omega=0). Its function is as follows. Involved in protein export. Acts as a chaperone by maintaining the newly synthesized protein in an open conformation. Functions as a peptidyl-prolyl cis-trans isomerase. This Marinobacter nauticus (strain ATCC 700491 / DSM 11845 / VT8) (Marinobacter aquaeolei) protein is Trigger factor.